The primary structure comprises 130 residues: Large ribosomal subunit protein bL19 (130 aa).

This sequence belongs to the bacterial ribosomal protein bL19 family.

Its function is as follows. This protein is located at the 30S-50S ribosomal subunit interface and may play a role in the structure and function of the aminoacyl-tRNA binding site. The polypeptide is Large ribosomal subunit protein bL19 (Burkholderia vietnamiensis (strain G4 / LMG 22486) (Burkholderia cepacia (strain R1808))).